The chain runs to 374 residues: Chaperone protein DnaJ (374 aa).

The J domain maps to 5–70; that stretch reads DYYEILGVSR…QKRAAYDQYG (66 aa). A CR-type zinc finger spans residues 129–207; sequence GVTREIRIPT…CHGHGRVEKS (79 aa). Positions 142, 145, 159, 162, 181, 184, 195, and 198 each coordinate Zn(2+). CXXCXGXG motif repeat units lie at residues 142–149, 159–166, 181–188, and 195–202; these read CDVCHGSG, CPTCHGQG, CPTCQGQG, and CTKCHGHG.

This sequence belongs to the DnaJ family. Homodimer. Zn(2+) is required as a cofactor.

It localises to the cytoplasm. In terms of biological role, participates actively in the response to hyperosmotic and heat shock by preventing the aggregation of stress-denatured proteins and by disaggregating proteins, also in an autonomous, DnaK-independent fashion. Unfolded proteins bind initially to DnaJ; upon interaction with the DnaJ-bound protein, DnaK hydrolyzes its bound ATP, resulting in the formation of a stable complex. GrpE releases ADP from DnaK; ATP binding to DnaK triggers the release of the substrate protein, thus completing the reaction cycle. Several rounds of ATP-dependent interactions between DnaJ, DnaK and GrpE are required for fully efficient folding. Also involved, together with DnaK and GrpE, in the DNA replication of plasmids through activation of initiation proteins. The protein is Chaperone protein DnaJ of Sodalis glossinidius (strain morsitans).